We begin with the raw amino-acid sequence, 573 residues long: Proline--tRNA ligase (573 aa).

Belongs to the class-II aminoacyl-tRNA synthetase family. ProS type 1 subfamily. In terms of assembly, homodimer.

The protein localises to the cytoplasm. The enzyme catalyses tRNA(Pro) + L-proline + ATP = L-prolyl-tRNA(Pro) + AMP + diphosphate. Catalyzes the attachment of proline to tRNA(Pro) in a two-step reaction: proline is first activated by ATP to form Pro-AMP and then transferred to the acceptor end of tRNA(Pro). As ProRS can inadvertently accommodate and process non-cognate amino acids such as alanine and cysteine, to avoid such errors it has two additional distinct editing activities against alanine. One activity is designated as 'pretransfer' editing and involves the tRNA(Pro)-independent hydrolysis of activated Ala-AMP. The other activity is designated 'posttransfer' editing and involves deacylation of mischarged Ala-tRNA(Pro). The misacylated Cys-tRNA(Pro) is not edited by ProRS. The polypeptide is Proline--tRNA ligase (Citrifermentans bemidjiense (strain ATCC BAA-1014 / DSM 16622 / JCM 12645 / Bem) (Geobacter bemidjiensis)).